The sequence spans 297 residues: PAK4-inhibitor INKA2 (297 aa).

Disordered stretches follow at residues 82-109, 175-200, and 234-285; these read GRGP…PSHR, LEKG…PQEL, and TPMV…LEHS. Over residues 92–102 the composition is skewed to low complexity; that stretch reads SPSSQPSLGSS. The segment at 137–180 is inka box; it reads EPDDWTSTLMSRGRNRQPLVLGDNVFADLVGNWLDLPELEKGGE. Over residues 244–253 the composition is skewed to basic residues; it reads RSQKVKKRSL.

Belongs to the INKA family. Interacts with PAK4.

Its subcellular location is the nucleus. In terms of biological role, inhibitor of the serine/threonine-protein kinase PAK4. Acts by binding PAK4 in a substrate-like manner, inhibiting the protein kinase activity. The sequence is that of PAK4-inhibitor INKA2 from Homo sapiens (Human).